Consider the following 238-residue polypeptide: MATLGVNIDHVATIRQARRTVEPDPVAAALLAELGGADGITVHLREDRRHIQERDVRLLRQTVRTHLNLEMAATPEMVAIALDIRPDYVTLVPERREEVTTEGGLDVVSQQEPLTQVVQTLQGAGIPVSLFIDADPTQLAAAAKTTAQFIELHTGRYAEAKGEVAQQRELAILADGVQQAKALGLRVNAGHGLTYSNVGAIARLEGIEELNIGHTIISRAVLVGMVQAVRDMKALISP.

Asn-7 is a 3-amino-2-oxopropyl phosphate binding site. 9-10 (DH) is a binding site for 1-deoxy-D-xylulose 5-phosphate. 3-amino-2-oxopropyl phosphate is bound at residue Arg-18. His-43 functions as the Proton acceptor in the catalytic mechanism. The 1-deoxy-D-xylulose 5-phosphate site is built by Arg-45 and His-50. The active-site Proton acceptor is the Glu-70. Thr-100 provides a ligand contact to 1-deoxy-D-xylulose 5-phosphate. His-191 functions as the Proton donor in the catalytic mechanism. 3-amino-2-oxopropyl phosphate contacts are provided by residues Gly-192 and 213 to 214 (GH).

This sequence belongs to the PNP synthase family. As to quaternary structure, homooctamer; tetramer of dimers.

It localises to the cytoplasm. The catalysed reaction is 3-amino-2-oxopropyl phosphate + 1-deoxy-D-xylulose 5-phosphate = pyridoxine 5'-phosphate + phosphate + 2 H2O + H(+). The protein operates within cofactor biosynthesis; pyridoxine 5'-phosphate biosynthesis; pyridoxine 5'-phosphate from D-erythrose 4-phosphate: step 5/5. In terms of biological role, catalyzes the complicated ring closure reaction between the two acyclic compounds 1-deoxy-D-xylulose-5-phosphate (DXP) and 3-amino-2-oxopropyl phosphate (1-amino-acetone-3-phosphate or AAP) to form pyridoxine 5'-phosphate (PNP) and inorganic phosphate. This is Pyridoxine 5'-phosphate synthase from Thermosynechococcus vestitus (strain NIES-2133 / IAM M-273 / BP-1).